A 103-amino-acid polypeptide reads, in one-letter code: Small ribosomal subunit protein uS10 (103 aa).

This sequence belongs to the universal ribosomal protein uS10 family. As to quaternary structure, part of the 30S ribosomal subunit.

Involved in the binding of tRNA to the ribosomes. The sequence is that of Small ribosomal subunit protein uS10 from Pseudoalteromonas translucida (strain TAC 125).